The following is an 886-amino-acid chain: General transcription factor 3C polypeptide 3 (886 aa).

The disordered stretch occupies residues 1–121 (MSGFSPELID…TPEQPTAGDV (121 aa)). Ser-2 bears the N-acetylserine mark. Residues 12 to 44 (LEGKISFEEFERRREERKTREKKSLQEKGKLSA) are compositionally biased toward basic and acidic residues. Ser-43 is modified (phosphoserine). Residues 53–63 (VPSSSGINSTK) show a composition bias toward polar residues. A compositionally biased stretch (acidic residues) spans 92–113 (ENEDDEEEEEEEEEEEEEEETP). TPR repeat units lie at residues 149-182 (LRGL…APLA), 183-216 (YEPF…NPSD), 217-250 (TEEW…EPTN), 252-284 (RYLW…LSPS), 290-323 (MQLA…HQGL), 326-361 (MEDV…EKKT), 421-454 (GDLY…ERYN), 456-489 (AVVW…APLH), 491-523 (DARI…DTLA), 733-766 (HALC…HPDE), and 811-844 (QESF…PPLV). A Phosphoserine modification is found at Ser-282.

As to quaternary structure, part of the TFIIIC subcomplex TFIIIC2, consisting of six subunits, GTF3C1, GTF3C2, GTF3C3, GTF3C4, GTF3C5 and GTF3C6. Interacts with BRF1 and TBP.

It localises to the nucleus. Involved in RNA polymerase III-mediated transcription. Integral, tightly associated component of the DNA-binding TFIIIC2 subcomplex that directly binds tRNA and virus-associated RNA promoters. This Homo sapiens (Human) protein is General transcription factor 3C polypeptide 3 (GTF3C3).